The chain runs to 459 residues: Methylenetetrahydrofolate--tRNA-(uracil-5-)-methyltransferase TrmFO (459 aa).

FAD is bound at residue 11–16 (GAGLAG).

It belongs to the MnmG family. TrmFO subfamily. The cofactor is FAD.

It localises to the cytoplasm. It catalyses the reaction uridine(54) in tRNA + (6R)-5,10-methylene-5,6,7,8-tetrahydrofolate + NADH + H(+) = 5-methyluridine(54) in tRNA + (6S)-5,6,7,8-tetrahydrofolate + NAD(+). The enzyme catalyses uridine(54) in tRNA + (6R)-5,10-methylene-5,6,7,8-tetrahydrofolate + NADPH + H(+) = 5-methyluridine(54) in tRNA + (6S)-5,6,7,8-tetrahydrofolate + NADP(+). Functionally, catalyzes the folate-dependent formation of 5-methyl-uridine at position 54 (M-5-U54) in all tRNAs. In Synechococcus sp. (strain CC9311), this protein is Methylenetetrahydrofolate--tRNA-(uracil-5-)-methyltransferase TrmFO.